The chain runs to 739 residues: Phosphoribosylformylglycinamidine synthase subunit PurL (739 aa).

Residue H52 is part of the active site. Positions 55 and 94 each coordinate ATP. E96 provides a ligand contact to Mg(2+). Substrate-binding positions include 97-100 (SHNH) and R119. The Proton acceptor role is filled by H98. Residue D120 participates in Mg(2+) binding. Position 243 (Q243) interacts with substrate. Residue D271 coordinates Mg(2+). 315 to 317 (ESQ) contributes to the substrate binding site. Residues D498 and G535 each contribute to the ATP site. A Mg(2+)-binding site is contributed by N536. S538 provides a ligand contact to substrate.

It belongs to the FGAMS family. In terms of assembly, monomer. Part of the FGAM synthase complex composed of 1 PurL, 1 PurQ and 2 PurS subunits.

The protein localises to the cytoplasm. It catalyses the reaction N(2)-formyl-N(1)-(5-phospho-beta-D-ribosyl)glycinamide + L-glutamine + ATP + H2O = 2-formamido-N(1)-(5-O-phospho-beta-D-ribosyl)acetamidine + L-glutamate + ADP + phosphate + H(+). Its pathway is purine metabolism; IMP biosynthesis via de novo pathway; 5-amino-1-(5-phospho-D-ribosyl)imidazole from N(2)-formyl-N(1)-(5-phospho-D-ribosyl)glycinamide: step 1/2. In terms of biological role, part of the phosphoribosylformylglycinamidine synthase complex involved in the purines biosynthetic pathway. Catalyzes the ATP-dependent conversion of formylglycinamide ribonucleotide (FGAR) and glutamine to yield formylglycinamidine ribonucleotide (FGAM) and glutamate. The FGAM synthase complex is composed of three subunits. PurQ produces an ammonia molecule by converting glutamine to glutamate. PurL transfers the ammonia molecule to FGAR to form FGAM in an ATP-dependent manner. PurS interacts with PurQ and PurL and is thought to assist in the transfer of the ammonia molecule from PurQ to PurL. The sequence is that of Phosphoribosylformylglycinamidine synthase subunit PurL from Caulobacter vibrioides (strain ATCC 19089 / CIP 103742 / CB 15) (Caulobacter crescentus).